The chain runs to 336 residues: Fructokinase-2 (336 aa).

Belongs to the carbohydrate kinase PfkB family. In terms of tissue distribution, expressed in stem, sheaths, anthers, and panicles (at protein level).

The enzyme catalyses D-fructose + ATP = D-fructose 6-phosphate + ADP + H(+). It participates in glycan biosynthesis; starch biosynthesis. Its activity is regulated as follows. Strongly inhibited at high fructose concentration. In terms of biological role, may play an important role in maintaining the flux of carbon towards starch formation in endosperm. May also be involved in a sugar-sensing pathway. This Oryza sativa subsp. japonica (Rice) protein is Fructokinase-2 (FRK2).